Here is a 294-residue protein sequence, read N- to C-terminus: 1,4-dihydroxy-2-naphthoate octaprenyltransferase (294 aa).

6 helical membrane-spanning segments follow: residues 35–55 (SAVW…VIGV), 103–123 (AGLA…ATCI), 140–160 (GFGE…GTEY), 166–186 (VDWV…SVLV), 220–240 (LLVA…WCAV), and 272–292 (GLAM…AGSV).

Belongs to the MenA family. Type 1 subfamily.

It is found in the cell membrane. The catalysed reaction is an all-trans-polyprenyl diphosphate + 1,4-dihydroxy-2-naphthoate + H(+) = a 2-demethylmenaquinol + CO2 + diphosphate. It participates in quinol/quinone metabolism; menaquinone biosynthesis; menaquinol from 1,4-dihydroxy-2-naphthoate: step 1/2. Functionally, conversion of 1,4-dihydroxy-2-naphthoate (DHNA) to demethylmenaquinone (DMK). This chain is 1,4-dihydroxy-2-naphthoate octaprenyltransferase, found in Mycobacterium leprae (strain TN).